Here is a 352-residue protein sequence, read N- to C-terminus: Protein-glutamate methylesterase/protein-glutamine glutaminase (352 aa).

Residues 5-123 (RILIVDDSVI…SKEKAIEYIR (119 aa)) form the Response regulatory domain. Residue aspartate 56 is modified to 4-aspartylphosphate. The region spanning 166–352 (EIVAIGVSTG…LAEEIIRRIG (187 aa)) is the CheB-type methylesterase domain. Residues serine 173, histidine 200, and aspartate 296 contribute to the active site.

Belongs to the CheB family. In terms of processing, phosphorylated by CheA. Phosphorylation of the N-terminal regulatory domain activates the methylesterase activity.

It localises to the cytoplasm. The catalysed reaction is [protein]-L-glutamate 5-O-methyl ester + H2O = L-glutamyl-[protein] + methanol + H(+). The enzyme catalyses L-glutaminyl-[protein] + H2O = L-glutamyl-[protein] + NH4(+). In terms of biological role, involved in chemotaxis. Part of a chemotaxis signal transduction system that modulates chemotaxis in response to various stimuli. Catalyzes the demethylation of specific methylglutamate residues introduced into the chemoreceptors (methyl-accepting chemotaxis proteins or MCP) by CheR. Also mediates the irreversible deamidation of specific glutamine residues to glutamic acid. The sequence is that of Protein-glutamate methylesterase/protein-glutamine glutaminase from Trichodesmium erythraeum (strain IMS101).